Reading from the N-terminus, the 417-residue chain is UDP-N-acetylglucosamine 1-carboxyvinyltransferase 3 (417 aa).

Lysine 22–asparagine 23 is a binding site for phosphoenolpyruvate. Arginine 92 contacts UDP-N-acetyl-alpha-D-glucosamine. Catalysis depends on cysteine 116, which acts as the Proton donor. Cysteine 116 is subject to 2-(S-cysteinyl)pyruvic acid O-phosphothioketal. Residues arginine 121–glutamine 125, aspartate 304, and isoleucine 326 each bind UDP-N-acetyl-alpha-D-glucosamine.

It belongs to the EPSP synthase family. MurA subfamily.

It localises to the cytoplasm. The catalysed reaction is phosphoenolpyruvate + UDP-N-acetyl-alpha-D-glucosamine = UDP-N-acetyl-3-O-(1-carboxyvinyl)-alpha-D-glucosamine + phosphate. It functions in the pathway cell wall biogenesis; peptidoglycan biosynthesis. In terms of biological role, cell wall formation. Adds enolpyruvyl to UDP-N-acetylglucosamine. The sequence is that of UDP-N-acetylglucosamine 1-carboxyvinyltransferase 3 from Caldanaerobacter subterraneus subsp. tengcongensis (strain DSM 15242 / JCM 11007 / NBRC 100824 / MB4) (Thermoanaerobacter tengcongensis).